Reading from the N-terminus, the 516-residue chain is Thioredoxin reductase 2, mitochondrial (516 aa).

Residue 62–79 (DYVKPTPVGTKWGIGGTC) coordinates FAD. A disulfide bridge links Cys-79 with Cys-84. Residue His-489 is the Proton acceptor of the active site.

The protein belongs to the class-I pyridine nucleotide-disulfide oxidoreductase family. In terms of assembly, homodimer. The cofactor is FAD.

It localises to the mitochondrion. The enzyme catalyses [thioredoxin]-dithiol + NADP(+) = [thioredoxin]-disulfide + NADPH + H(+). In terms of biological role, thioredoxin system is a major player in glutathione metabolism, due to the demonstrated absence of a glutathione reductase. Functionally interacts with the Sod/Cat reactive oxidation species (ROS) defense system and thereby has a role in preadult development and life span. Lack of a glutathione reductase suggests antioxidant defense in Drosophila, and probably in related insects, differs fundamentally from that in other organisms. The polypeptide is Thioredoxin reductase 2, mitochondrial (Drosophila melanogaster (Fruit fly)).